A 304-amino-acid chain; its full sequence is tRNA pseudouridine synthase B (304 aa).

Asp48 functions as the Nucleophile in the catalytic mechanism.

Belongs to the pseudouridine synthase TruB family. Type 1 subfamily.

It catalyses the reaction uridine(55) in tRNA = pseudouridine(55) in tRNA. Functionally, responsible for synthesis of pseudouridine from uracil-55 in the psi GC loop of transfer RNAs. The protein is tRNA pseudouridine synthase B of Pseudomonas paraeruginosa (strain DSM 24068 / PA7) (Pseudomonas aeruginosa (strain PA7)).